Here is an 830-residue protein sequence, read N- to C-terminus: MNLQTSTNQTIGPYVIRSEIGRGSFAIVYKGKHTETNRVISIKSVLTKKLTKKLLENLESEISILKEIRHVHVVELIDCIKAGRFIHLVMEYCSLGDLSYFIRKREKFNSIPSLAWINIDHPPVYKAGLNETLVRHFTQQLASALQFLRSRSLIHRDVKPQNLLLQPPPTAAYLEEHPQFVGSPKLPMLKLADFGFARYLQTSSMAETLCGSPLYMAPEILRYEKYDAKADLWSVGAVLYEMAVGKPPFKAPNHVELLRRIQKAKDVIKFPEEAFIHPDIKTLICALLKQNPADRIDYDGFFSSIVVTTPLDDASTLTGSDIQDAVKEINIPSSSPAYITDFFPKSNPGAPAPPGGLLRQAFQAQGSSIQPSEITGRRVPHRYAQDGNTLPYTPVFPPESAPAASIFPPRLTSKQPIPMASPAKLTSDTSNKSSAYVVVDHHPIISSTQLSNESLTHEQSINGNSPSPNEGVFQGSFSPESAPVNNHAFPHTSRMQIPYMKPNAFPSNPTYIASTPVTQLRRAFEQATAHVPQSGGGARNKSALERALNVANARLNEVVVDGMTDNGNTSLPTKESNLDNNVNIIQPSLPDTGKRLLDVLESIAMKSNSVYHLAEVKLAQIIPSLSDEMKPGDTLLDRPLTPFSLVMLAKESYVLYERDIELLQVAFDGVAAFWANSEERASPDCQQAIEWFRQRYSESLEKSQFLREIIISQSAAHSLPTTKPVSASQLIYHRALDLSRNAATSELSGNDAQACLQNYRLAAHLLESLLESNFSTPDGANDSNNSVTIRNLIALITKRQELLQSKQIQANVANKVTESVAKITLAPNLA.

Residues 14–307 enclose the Protein kinase domain; sequence YVIRSEIGRG…YDGFFSSIVV (294 aa). Residues 20–28 and Lys-43 contribute to the ATP site; that span reads IGRGSFAIV. Residue Asp-157 is the Proton acceptor of the active site. Ser-346 bears the Phosphoserine mark. Residues 448 to 468 show a composition bias toward polar residues; that stretch reads TQLSNESLTHEQSINGNSPSP. Residues 448–480 are disordered; sequence TQLSNESLTHEQSINGNSPSPNEGVFQGSFSPE.

The protein belongs to the protein kinase superfamily. Ser/Thr protein kinase family. APG1/unc-51/ULK1 subfamily. As to quaternary structure, homodimer. Component of the atg1 kinase complex composed of at least atg1, atg13, atg17 and atg101. Interacts directly with atg13. In terms of processing, phosphorylated. Dephosphorylated under depletion of nitrogen.

It catalyses the reaction L-seryl-[protein] + ATP = O-phospho-L-seryl-[protein] + ADP + H(+). The enzyme catalyses L-threonyl-[protein] + ATP = O-phospho-L-threonyl-[protein] + ADP + H(+). In terms of biological role, serine/threonine protein kinase involved in the cytoplasm to vacuole transport (Cvt) and found to be essential in autophagy, where it is required for the formation of autophagosomes. Involved in the clearance of protein aggregates which cannot be efficiently cleared by the proteasome. Required for selective autophagic degradation of the nucleus (nucleophagy) as well as for mitophagy which contributes to regulate mitochondrial quantity and quality by eliminating the mitochondria to a basal level to fulfill cellular energy requirements and preventing excess ROS production. Also involved in endoplasmic reticulum-specific autophagic process, in selective removal of ER-associated degradation (ERAD) substrates. Plays a key role in ATG9 and ATG23 cycling through the pre-autophagosomal structure and is necessary to promote ATG18 binding to ATG9 through phosphorylation of ATG9. Catalyzes phosphorylation of ATG4, decreasing the interaction between ATG4 and ATG8 and impairing deconjugation of PE-conjugated forms of ATG8. Autophagy functions to supply nitrogen and is activated when cells cannot access exogenous nitrogen, thus ensuring that they can adapt and subsequently propagate. Finally, atg13 is also required for glycogen storage during stationary phase and has a role in meiosis and sporulation. This Schizosaccharomyces pombe (strain 972 / ATCC 24843) (Fission yeast) protein is Serine/threonine-protein kinase atg1.